The primary structure comprises 154 residues: Keratin-associated protein 9-9 (154 aa).

14 tandem repeats follow at residues 8–12 (CCQPT), 13–17 (CCRTT), 18–22 (CCRTT), 37–41 (CCQPS), 42–46 (CCVSS), 51–55 (CCRPA), 56–60 (CCQNT), 61–65 (CCRTT), 66–70 (CCQPT), 75–79 (CCGQT), 124–128 (CCRPA), 129–133 (CCETT), 134–137 (CCRT), and 148–152 (CCQPS). A 14 X 5 AA repeats of C-C-[RQVGE]-[SPSTNQ]-[TASL] region spans residues 8–152 (CCQPTCCRTT…TCVSSCCQPS (145 aa)).

Belongs to the KRTAP type 9 family. In terms of assembly, interacts with hair keratins.

In the hair cortex, hair keratin intermediate filaments are embedded in an interfilamentous matrix, consisting of hair keratin-associated proteins (KRTAP), which are essential for the formation of a rigid and resistant hair shaft through their extensive disulfide bond cross-linking with abundant cysteine residues of hair keratins. The matrix proteins include the high-sulfur and high-glycine-tyrosine keratins. This is Keratin-associated protein 9-9 (KRTAP9-9) from Homo sapiens (Human).